We begin with the raw amino-acid sequence, 779 residues long: MGERSGKRELPLLPLRGLLVYPTMVLHLDVGREKSIRALEQAMVDDNKILLATQEEVHIEEPDAEQIYSIGTVARVKQMLKLPNGTIRVLVEGLQRAKIEEYLQKEDYFVVSITYLKEEKAEENEVEALMRSLLTHFEQYIKLSKKVSPETLTSVQDIEEPGRLADVIASHLPLKMKDKQEILETVNIQERLEILLTILNNEREVLELERKIGNRVKKQMERTQKEYYLREQMKAIQKELGDKDGRQGEVDELRAQLEKSDAPERIKAKIEKELERLEKMPSTSAEGSVIRTYIDTLFALPWTKTTEDNLDIKHAEEVLDEDHYGLEKPKERVLEYLAVQKLVNSMRGPILCLVGPPGVGKTSLARSVARALGREFVRISLGGVRDEAEIRGHRRTYVGALPGRIIQGMKQAGTINPVFLLDEIDKLASDFRGDPASALLEVLDPNQNDKFSDHYIEETYDLTNVMFITTANSLDTIPRPLLDRMEVISISGYTELEKLNILRGYLLPKQMEDHGLGKDKLQMNEDAMLKLVRLYTREAGVRNLNREAANVCRKAAKIIVGGEKKRVVVTAKTLEALLGKPRYRYGLAEKKDQVGSVTGLAWTQAGGDTLNVEVSILAGKGKLTLTGQLGDVMKESAQAAFSYIRSRASEWGIDPEFHEKNDIHIHVPEGAIPKDGPSAGITMATALVSALTGIPVKKEVGMTGEITLRGRVLPIGGLKEKCMSAHRAGLTTIILPKDNEKDIEDIPESVREALTFYPVEHLDEVLRHALTKQPVGDKK.

The Lon N-terminal domain occupies 10 to 203 (LPLLPLRGLL…ILLTILNNER (194 aa)). 355–362 (GPPGVGKT) is a binding site for ATP. One can recognise a Lon proteolytic domain in the interval 591–772 (KDQVGSVTGL…DEVLRHALTK (182 aa)). Active-site residues include serine 678 and lysine 721.

It belongs to the peptidase S16 family. Homohexamer. Organized in a ring with a central cavity.

The protein localises to the cytoplasm. It catalyses the reaction Hydrolysis of proteins in presence of ATP.. Its function is as follows. ATP-dependent serine protease that mediates the selective degradation of mutant and abnormal proteins as well as certain short-lived regulatory proteins. Required for cellular homeostasis and for survival from DNA damage and developmental changes induced by stress. Degrades polypeptides processively to yield small peptide fragments that are 5 to 10 amino acids long. Binds to DNA in a double-stranded, site-specific manner. The sequence is that of Lon protease from Brevibacillus choshinensis.